The chain runs to 138 residues: Putative pre-16S rRNA nuclease (138 aa).

Belongs to the YqgF nuclease family.

The protein resides in the cytoplasm. In terms of biological role, could be a nuclease involved in processing of the 5'-end of pre-16S rRNA. The sequence is that of Putative pre-16S rRNA nuclease from Caldicellulosiruptor bescii (strain ATCC BAA-1888 / DSM 6725 / KCTC 15123 / Z-1320) (Anaerocellum thermophilum).